The chain runs to 62 residues: Beta-defensin 133 (62 aa).

A signal peptide spans 1–21 (MKIHIFLFVLFFFLVPIATRG). 2 disulfide bridges follow: Cys-32–Cys-60 and Cys-39–Cys-53.

It belongs to the beta-defensin family.

Its subcellular location is the secreted. In terms of biological role, has antibacterial activity. This is Beta-defensin 133 (DEFB133) from Pan troglodytes (Chimpanzee).